The following is a 396-amino-acid chain: Phosphopentomutase (396 aa).

Residues D13, D288, H293, D329, H330, and H341 each contribute to the Mn(2+) site.

Belongs to the phosphopentomutase family. Requires Mn(2+) as cofactor.

It is found in the cytoplasm. It carries out the reaction 2-deoxy-alpha-D-ribose 1-phosphate = 2-deoxy-D-ribose 5-phosphate. The enzyme catalyses alpha-D-ribose 1-phosphate = D-ribose 5-phosphate. The protein operates within carbohydrate degradation; 2-deoxy-D-ribose 1-phosphate degradation; D-glyceraldehyde 3-phosphate and acetaldehyde from 2-deoxy-alpha-D-ribose 1-phosphate: step 1/2. In terms of biological role, isomerase that catalyzes the conversion of deoxy-ribose 1-phosphate (dRib-1-P) and ribose 1-phosphate (Rib-1-P) to deoxy-ribose 5-phosphate (dRib-5-P) and ribose 5-phosphate (Rib-5-P), respectively. In Clostridium beijerinckii (strain ATCC 51743 / NCIMB 8052) (Clostridium acetobutylicum), this protein is Phosphopentomutase.